Here is a 473-residue protein sequence, read N- to C-terminus: Mogroside IIIx synthase (473 aa).

H21 acts as the Proton acceptor in catalysis. D123 serves as the catalytic Charge relay. UDP-alpha-D-glucose-binding residues include T274, Q337, W355, N356, S357, E360, D376, and Q377.

It belongs to the UDP-glycosyltransferase family. Highly expressed in mature fruits.

The catalysed reaction is mogroside IIE + UDP-alpha-D-glucose = mogroside IIIX + UDP + H(+). It catalyses the reaction mogroside III + UDP-alpha-D-glucose = siamenoside I + UDP + H(+). It functions in the pathway secondary metabolite biosynthesis; terpenoid biosynthesis. Functionally, UDP-glycosyltransferase involved in the biosynthesis of cucurbitacin and mogroside tetracyclic triterpene natural products (e.g. siamenoside I and mogrosides IV, V and VI). Cucurbitacins have cytotoxic properties and exhibit deterrent taste as a defense barrier against herbivores. Mogrosides are nonsugar highly oxygenated compounds used as high-intensity zero-calorie sweeteners; they also possess pharmacological properties such as regulating immunity, lowering blood sugar and lipid levels, protecting the liver, and acting as antioxidants and antitumor agents. Catalyzes the branched glucosylations of mogroside II-E and mogroside III. This Siraitia grosvenorii (Monk's fruit) protein is Mogroside IIIx synthase.